The primary structure comprises 220 residues: FMN-dependent NADH:quinone oxidoreductase (220 aa).

Residues Ser-10, 17–19, and 136–139 each bind FMN; these read SAS and SRGG. The disordered stretch occupies residues 200–220; the sequence is HSEAVTKAKELTERLTADNGR.

The protein belongs to the azoreductase type 1 family. Homodimer. Requires FMN as cofactor.

The enzyme catalyses 2 a quinone + NADH + H(+) = 2 a 1,4-benzosemiquinone + NAD(+). It carries out the reaction N,N-dimethyl-1,4-phenylenediamine + anthranilate + 2 NAD(+) = 2-(4-dimethylaminophenyl)diazenylbenzoate + 2 NADH + 2 H(+). Quinone reductase that provides resistance to thiol-specific stress caused by electrophilic quinones. Its function is as follows. Also exhibits azoreductase activity. Catalyzes the reductive cleavage of the azo bond in aromatic azo compounds to the corresponding amines. This chain is FMN-dependent NADH:quinone oxidoreductase, found in Streptomyces coelicolor (strain ATCC BAA-471 / A3(2) / M145).